A 405-amino-acid polypeptide reads, in one-letter code: uncharacterized protein (405 aa).

A run of 12 helical transmembrane segments spans residues 32 to 52, 53 to 73, 84 to 104, 108 to 128, 150 to 170, 171 to 191, 237 to 257, 260 to 280, 291 to 311, 314 to 334, 352 to 372, and 378 to 398; these read MFVLTLVLFALARFSSPVLAG, WLTFAAIVPGLIVSPLAGVLL, IDMIASTAFITAISLAGWLGW, PVVCTLAMLFSLAGPLGIAGI, AVYSIVDVVGPAMAGGLVGWL, GPEAAMSLIAAACAGAAVCLS, WGALHVVIPVFVAGNYTVAAG, VVGLLWALVGIAGGVGALLAG, IMTAGMAVTAFATWPIAAEFG, GLTIGLLLAGAMSGPIDVAML, ISISVNQAGFPLGAAIAGVVI, and AIFVLAGITSVLAAIATLSIP.

The protein belongs to the major facilitator superfamily.

It is found in the cell membrane. This is an uncharacterized protein from Sinorhizobium fredii (strain NBRC 101917 / NGR234).